The primary structure comprises 351 residues: Inositol monophosphatase 3 (351 aa).

Residues 11-31 traverse the membrane as a helical segment; sequence LGIGVFCLLALGVLYHVYSGF. The Mg(2+) site is built by E121, D162, L164, D165, and D288. A substrate-binding site is contributed by E121. Substrate contacts are provided by residues 164 to 167 and D288; that span reads LDAT.

It belongs to the inositol monophosphatase superfamily. Requires Mg(2+) as cofactor.

It is found in the membrane. It carries out the reaction a myo-inositol phosphate + H2O = myo-inositol + phosphate. It participates in polyol metabolism; myo-inositol biosynthesis; myo-inositol from D-glucose 6-phosphate: step 2/2. This chain is Inositol monophosphatase 3 (bpnt2), found in Xenopus laevis (African clawed frog).